We begin with the raw amino-acid sequence, 192 residues long: Ribose 1,5-bisphosphate phosphokinase PhnN (192 aa).

This sequence belongs to the ribose 1,5-bisphosphokinase family.

It catalyses the reaction alpha-D-ribose 1,5-bisphosphate + ATP = 5-phospho-alpha-D-ribose 1-diphosphate + ADP. It participates in metabolic intermediate biosynthesis; 5-phospho-alpha-D-ribose 1-diphosphate biosynthesis; 5-phospho-alpha-D-ribose 1-diphosphate from D-ribose 5-phosphate (route II): step 3/3. Catalyzes the phosphorylation of ribose 1,5-bisphosphate to 5-phospho-D-ribosyl alpha-1-diphosphate (PRPP). The sequence is that of Ribose 1,5-bisphosphate phosphokinase PhnN from Achromobacter xylosoxidans (strain A8).